The sequence spans 185 residues: Elongation factor P (185 aa).

Belongs to the elongation factor P family.

It localises to the cytoplasm. It functions in the pathway protein biosynthesis; polypeptide chain elongation. In terms of biological role, involved in peptide bond synthesis. Stimulates efficient translation and peptide-bond synthesis on native or reconstituted 70S ribosomes in vitro. Probably functions indirectly by altering the affinity of the ribosome for aminoacyl-tRNA, thus increasing their reactivity as acceptors for peptidyl transferase. The polypeptide is Elongation factor P (Metamycoplasma arthritidis (strain 158L3-1) (Mycoplasma arthritidis)).